Consider the following 464-residue polypeptide: uncharacterized protein (464 aa).

Disordered regions lie at residues 290–374 (YRKQ…ERPK) and 445–464 (ETDD…PLEE). Over residues 293-302 (QQQWQQQQQQ) the composition is skewed to low complexity. Basic residues predominate over residues 303 to 318 (RKVKTPIKKQEAKKKA). A compositionally biased stretch (polar residues) spans 352 to 367 (DMKQQQQMEKGTTSKQ). A compositionally biased stretch (acidic residues) spans 445 to 454 (ETDDEDEENQ).

This is an uncharacterized protein from Macaca fascicularis (Crab-eating macaque).